Here is a 582-residue protein sequence, read N- to C-terminus: Poly(A) RNA polymerase, mitochondrial (582 aa).

A mitochondrion-targeting transit peptide spans 1–37 (MAVPGVGLLTRLNLCARRRTRVQRPIVRLLSCPGTVA). N6-acetyllysine is present on Lys-90. ATP-binding positions include 107–109 (YES) and 241–242 (GC). Mg(2+) is bound by residues Asp-243 and Asp-245. The PAP-associated domain occupies 437–483 (LELLLKEFFEYFGNFAFDKNSINIRQGREQNKPDSSPLYIQNPFETS).

The protein belongs to the DNA polymerase type-B-like family. In terms of assembly, homodimer. Mg(2+) serves as cofactor. Requires Mn(2+) as cofactor. As to expression, ubiquitous, with stronger expression in tissues with high energy requirements: heart, brain, and skeletal muscle.

Its subcellular location is the cytoplasm. It localises to the mitochondrion. It carries out the reaction RNA(n) + ATP = RNA(n)-3'-adenine ribonucleotide + diphosphate. Its function is as follows. Polymerase that creates the 3' poly(A) tail of mitochondrial transcripts. Can use all four nucleotides, but has higher activity with ATP and UTP (in vitro). Plays a role in replication-dependent histone mRNA degradation. May be involved in the terminal uridylation of mature histone mRNAs before their degradation is initiated. Might be responsible for the creation of some UAA stop codons which are not encoded in mtDNA. This chain is Poly(A) RNA polymerase, mitochondrial (MTPAP), found in Homo sapiens (Human).